We begin with the raw amino-acid sequence, 104 residues long: Large ribosomal subunit protein bL21 (104 aa).

This sequence belongs to the bacterial ribosomal protein bL21 family. As to quaternary structure, part of the 50S ribosomal subunit. Contacts protein L20.

Its function is as follows. This protein binds to 23S rRNA in the presence of protein L20. This chain is Large ribosomal subunit protein bL21, found in Francisella philomiragia subsp. philomiragia (strain ATCC 25017 / CCUG 19701 / FSC 153 / O#319-036).